The sequence spans 248 residues: Probable uridine-cytidine kinase (248 aa).

15–23 (GGTSCGKST) is a binding site for ATP. 5 residues coordinate substrate: aspartate 73, tyrosine 101, arginine 154, arginine 164, and glutamine 172. Aspartate 201 contributes to the ATP binding site. Residues 224-248 (SDEEEEKENELVKQGSFRRPFSRPH) are disordered.

The protein belongs to the uridine kinase family.

It carries out the reaction uridine + ATP = UMP + ADP + H(+). The enzyme catalyses cytidine + ATP = CMP + ADP + H(+). The protein operates within pyrimidine metabolism; CTP biosynthesis via salvage pathway; CTP from cytidine: step 1/3. It functions in the pathway pyrimidine metabolism; UMP biosynthesis via salvage pathway; UMP from uridine: step 1/1. The polypeptide is Probable uridine-cytidine kinase (Caenorhabditis elegans).